Here is a 332-residue protein sequence, read N- to C-terminus: Processive diacylglycerol alpha-glucosyltransferase (332 aa).

This sequence belongs to the glycosyltransferase group 1 family. Glycosyltransferase 4 subfamily. Requires Mg(2+) as cofactor.

The protein localises to the cell membrane. The enzyme catalyses a 1,2-diacyl-sn-glycerol + UDP-alpha-D-glucose = a 1,2-diacyl-3-O-(alpha-D-glucopyranosyl)-sn-glycerol + UDP + H(+). The catalysed reaction is a 1,2-diacyl-3-O-(alpha-D-glucopyranosyl)-sn-glycerol + UDP-alpha-D-glucose = a 1,2-diacyl-3-O-[alpha-D-glucosyl-(1-&gt; 2)-alpha-D-glucosyl]-sn-glycerol + UDP + H(+). It functions in the pathway glycolipid metabolism; diglucosyl-diacylglycerol biosynthesis. Activated by the negatively charged lipids phosphatidylglycerol (PG), cardiolipin (CL), nonbilayer-prone 1,3-DAG, 1,2-dioleoylphosphatidylglycerol (DOPG) and 1,2-dioleoylphosphatidylserine (DOPS). Inhibited by 1,2-diacyl-3-O-(alpha-D-galactopyranosyl)-sn-glycerol, 1,2-diacyl-3-O-[6-O-acyl(alpha-D-glucopyranosyl)]-sn-glycerol and 1,2-diacyl-3-O-[alpha-D-glucopyranosyl-(1-&gt;2)-O-(6-O-acyl-alpha-D-glucopyranosyl)]-sn-glycerol. Functionally, processive glucosyltransferase involved in the biosynthesis of both the non-bilayer-prone alpha-monoglucosyldiacylglycerol and the bilayer-forming membrane lipid alpha-diglucosyldiacylglycerol. These are major components for maintaining the anionic lipid surface charge density, for balancing the bilayer to non-bilayer phase equilibria and for keeping a constant lipid bilayer spontaneous curvature (curvature packing stress). Catalyzes the transfer of a glucosyl residue from UDP-Glc to diacylglycerol (DAG) acceptor to form the corresponding alpha-glucosyl-DAG (1,2-diacyl-3-O-(alpha-D-glucopyranosyl)-sn-glycerol), which then acts as acceptor to give alpha-diglucosyl-DAG product (3-O-(alpha-D-glucopyranosyl-alpha-(1-&gt;2)-D-glucopyranosyl)-1,2-diacyl-sn-glycerol). It can only use UDP-Glc as sugar donor. This is Processive diacylglycerol alpha-glucosyltransferase (dgs) from Acholeplasma laidlawii.